We begin with the raw amino-acid sequence, 309 residues long: Xylose/arabinose import permease protein XacI (309 aa).

6 consecutive transmembrane segments (helical) span residues 29–49 (LVVF…MTAI), 89–109 (LIMS…AAYG), 121–141 (MLML…VPLA), 170–190 (ELVP…TILF), 227–247 (MFGV…LFAF), and 282–302 (AAFL…EQFA). Residues 85 to 297 (FFNSLIMSIP…VPTLILYVAF (213 aa)) enclose the ABC transmembrane type-1 domain.

It belongs to the binding-protein-dependent transport system permease family. In terms of assembly, the complex is composed of two ATP-binding proteins (XacJ and XacK), two transmembrane proteins (XacH and XacI) and a solute-binding protein (XacG).

The protein resides in the cell membrane. Its function is as follows. Part of the ABC transporter complex XacGHIJK involved in the uptake of xylose and arabinose. Responsible for the translocation of the substrate across the membrane. This is Xylose/arabinose import permease protein XacI from Haloferax volcanii (strain ATCC 29605 / DSM 3757 / JCM 8879 / NBRC 14742 / NCIMB 2012 / VKM B-1768 / DS2) (Halobacterium volcanii).